A 100-amino-acid chain; its full sequence is Biogenesis of lysosome-related organelles complex 1 subunit CNL1 (100 aa).

Positions 25-46 (SDRVKSLELEATRLVQRQNELV) form a coiled coil.

The protein belongs to the BLOC1S4 family. In terms of assembly, component of the biogenesis of lysosome-related organelles complex-1 (BLOC-1).

The protein localises to the cytoplasm. In terms of biological role, component of the biogenesis of lysosome-related organelles complex-1 (BLOC-1), a complex that is involved in endosomal cargo sorting. The sequence is that of Biogenesis of lysosome-related organelles complex 1 subunit CNL1 (CLN1) from Candida glabrata (strain ATCC 2001 / BCRC 20586 / JCM 3761 / NBRC 0622 / NRRL Y-65 / CBS 138) (Yeast).